The chain runs to 159 residues: Large ribosomal subunit protein uL11 (159 aa).

It belongs to the universal ribosomal protein uL11 family. Part of the ribosomal stalk of the 50S ribosomal subunit. Interacts with L10 and the large rRNA to form the base of the stalk. L10 forms an elongated spine to which L12 dimers bind in a sequential fashion forming a multimeric L10(L12)X complex.

In terms of biological role, forms part of the ribosomal stalk which helps the ribosome interact with GTP-bound translation factors. The protein is Large ribosomal subunit protein uL11 of Nitrosopumilus maritimus (strain SCM1).